A 407-amino-acid chain; its full sequence is Tyrosine--tRNA ligase (407 aa).

Tyr35 contacts L-tyrosine. The 'HIGH' region signature appears at 40 to 49 (PTADSLHVGH). The L-tyrosine site is built by Tyr168 and Gln172. Residues 228–232 (KMGKT) carry the 'KMSKS' region motif. Residue Lys231 coordinates ATP. Residues 341–405 (NPLVDLLAKC…RGKKNFNRIV (65 aa)) enclose the S4 RNA-binding domain.

The protein belongs to the class-I aminoacyl-tRNA synthetase family. TyrS type 1 subfamily. Homodimer.

It is found in the cytoplasm. It catalyses the reaction tRNA(Tyr) + L-tyrosine + ATP = L-tyrosyl-tRNA(Tyr) + AMP + diphosphate + H(+). Functionally, catalyzes the attachment of tyrosine to tRNA(Tyr) in a two-step reaction: tyrosine is first activated by ATP to form Tyr-AMP and then transferred to the acceptor end of tRNA(Tyr). The sequence is that of Tyrosine--tRNA ligase from Clostridium botulinum (strain 657 / Type Ba4).